The chain runs to 294 residues: MNNIFKGLITAIITPFRDNKLDLNALEKILEYQINAEVNAVVIAGSTGEGSSLSFEEYKLLLQTAKDIVNKRIPVISGCSSNNTACAIELAAESTKIGVDGFMISPPSYLKPTQGGIYKHFEAIHEASNLPIMLYSVPSRTGVDFTDETILKLSKLSRILALKDAGIDLERPLRIKSVINKELNLLCGNDDLSLAFNAQGGVGCVSVASNITPKLCKELQEKWHNNDVKGALGIHQRLLPLYKALFVESNPIPVKYAMYYLGFCTNEIRLPLTEATDTTKKQIEEIITSLSIKV.

Thr47 serves as a coordination point for pyruvate. Catalysis depends on Tyr135, which acts as the Proton donor/acceptor. Lys163 serves as the catalytic Schiff-base intermediate with substrate. Residue Val205 participates in pyruvate binding.

This sequence belongs to the DapA family. As to quaternary structure, homotetramer; dimer of dimers.

It localises to the cytoplasm. It catalyses the reaction L-aspartate 4-semialdehyde + pyruvate = (2S,4S)-4-hydroxy-2,3,4,5-tetrahydrodipicolinate + H2O + H(+). The protein operates within amino-acid biosynthesis; L-lysine biosynthesis via DAP pathway; (S)-tetrahydrodipicolinate from L-aspartate: step 3/4. Functionally, catalyzes the condensation of (S)-aspartate-beta-semialdehyde [(S)-ASA] and pyruvate to 4-hydroxy-tetrahydrodipicolinate (HTPA). The sequence is that of 4-hydroxy-tetrahydrodipicolinate synthase from Rickettsia bellii (strain OSU 85-389).